The following is a 540-amino-acid chain: Acetyl-coenzyme A carboxylase carboxyl transferase subunit beta, chloroplastic (540 aa).

The tract at residues 229 to 249 is disordered; that stretch reads YSDNGSSSIRTRTSTSSGSSY. Residues 233-248 are compositionally biased toward low complexity; that stretch reads GSSSIRTRTSTSSGSS. One can recognise a CoA carboxyltransferase N-terminal domain in the interval 267–538; the sequence is LWVQCENCYA…TFHPLKSNKV (272 aa). The Zn(2+) site is built by cysteine 271, cysteine 274, cysteine 290, and cysteine 293. The C4-type zinc finger occupies 271-293; it reads CENCYALNYNKLFRSKMNVCEQC.

It belongs to the AccD/PCCB family. As to quaternary structure, acetyl-CoA carboxylase is a heterohexamer composed of biotin carboxyl carrier protein, biotin carboxylase and 2 subunits each of ACCase subunit alpha and ACCase plastid-coded subunit beta (accD). Zn(2+) is required as a cofactor.

It localises to the plastid. Its subcellular location is the chloroplast stroma. It catalyses the reaction N(6)-carboxybiotinyl-L-lysyl-[protein] + acetyl-CoA = N(6)-biotinyl-L-lysyl-[protein] + malonyl-CoA. It participates in lipid metabolism; malonyl-CoA biosynthesis; malonyl-CoA from acetyl-CoA: step 1/1. Its function is as follows. Component of the acetyl coenzyme A carboxylase (ACC) complex. Biotin carboxylase (BC) catalyzes the carboxylation of biotin on its carrier protein (BCCP) and then the CO(2) group is transferred by the transcarboxylase to acetyl-CoA to form malonyl-CoA. The chain is Acetyl-coenzyme A carboxylase carboxyl transferase subunit beta, chloroplastic from Amborella trichopoda.